Consider the following 56-residue polypeptide: Large ribosomal subunit protein eL20 (56 aa).

Residues 1-24 (MSTYTVRGSFPARDGPQQFEKEVE) form a disordered region.

Belongs to the eukaryotic ribosomal protein eL20 family. In terms of assembly, part of the 50S ribosomal subunit. Binds 23S rRNA.

This is Large ribosomal subunit protein eL20 from Haloarcula marismortui (strain ATCC 43049 / DSM 3752 / JCM 8966 / VKM B-1809) (Halobacterium marismortui).